The following is a 173-amino-acid chain: Ribonuclease H (173 aa).

The segment at 1–20 (MKATSKAKTHPPGATAAKDP) is disordered. An RNase H type-1 domain is found at 20-162 (PQKQVIIYTD…CDVLSKEAAG (143 aa)). Asp29, Glu67, Asp89, and Asp154 together coordinate Mg(2+).

This sequence belongs to the RNase H family. Monomer. Mg(2+) serves as cofactor.

The protein resides in the cytoplasm. The enzyme catalyses Endonucleolytic cleavage to 5'-phosphomonoester.. Functionally, endonuclease that specifically degrades the RNA of RNA-DNA hybrids. This is Ribonuclease H from Syntrophus aciditrophicus (strain SB).